Reading from the N-terminus, the 81-residue chain is uncharacterized protein (81 aa).

Residues 1 to 58 (MPQSKQQFKRQGARQRDSKGKFVKARTGMATAPPAAVSTAAPTASTMTPTGSSTTATI) are disordered. Positions 30-58 (ATAPPAAVSTAAPTASTMTPTGSSTTATI) are enriched in low complexity.

This is an uncharacterized protein from Caenorhabditis elegans.